The chain runs to 194 residues: Glycerol-3-phosphate acyltransferase 2 (194 aa).

The next 5 membrane-spanning stretches (helical) occupy residues 1–21, 64–84, 112–132, 135–155, and 156–173; these read MWLL…AYVV, VLAV…LAAL, LAMA…VVIF, YISL…IYFH, and RPWP…LVIY.

It belongs to the PlsY family. Probably interacts with PlsX.

The protein resides in the cell membrane. The catalysed reaction is an acyl phosphate + sn-glycerol 3-phosphate = a 1-acyl-sn-glycero-3-phosphate + phosphate. The protein operates within lipid metabolism; phospholipid metabolism. Functionally, catalyzes the transfer of an acyl group from acyl-phosphate (acyl-PO(4)) to glycerol-3-phosphate (G3P) to form lysophosphatidic acid (LPA). This enzyme utilizes acyl-phosphate as fatty acyl donor, but not acyl-CoA or acyl-ACP. The sequence is that of Glycerol-3-phosphate acyltransferase 2 from Moorella thermoacetica (strain ATCC 39073 / JCM 9320).